The following is a 76-amino-acid chain: Small ribosomal subunit protein bS18 (76 aa).

It belongs to the bacterial ribosomal protein bS18 family. Part of the 30S ribosomal subunit. Forms a tight heterodimer with protein bS6.

Its function is as follows. Binds as a heterodimer with protein bS6 to the central domain of the 16S rRNA, where it helps stabilize the platform of the 30S subunit. This Psychrobacter arcticus (strain DSM 17307 / VKM B-2377 / 273-4) protein is Small ribosomal subunit protein bS18.